We begin with the raw amino-acid sequence, 238 residues long: DNA repair protein RecO (238 aa).

It belongs to the RecO family.

Functionally, involved in DNA repair and RecF pathway recombination. This Hahella chejuensis (strain KCTC 2396) protein is DNA repair protein RecO.